Consider the following 303-residue polypeptide: MIRQRTLKNTIRATGVGLHSGEKVYLTLKPAPVDTGIVFRRADLSPVVEIPARAANVGETTMSTTLVNGDVKVDTVEHLLSAMAGLGIDNAYVELSASEVPIMDGSAGPFVFLIQSAGLEEQDAPKKFIRILREVTVEDGDKRATFLPFDGFKVSFEIDFDHPVLKGQTQSASVDFSSTSFVKEVSRARTFGFMRDIEYLRKHNLALGGSVENAIVVDETGVLNEDGLRSEDEFVKHKILDAIGDLYLLGNSLIGEFKGYKSGHSLNNQLLRKLIAETDAWEVVFFEDASTAPISYMRPVAAV.

Residues His-78, His-237, and Asp-241 each contribute to the Zn(2+) site. Residue His-264 is the Proton donor of the active site.

This sequence belongs to the LpxC family. Requires Zn(2+) as cofactor.

The catalysed reaction is a UDP-3-O-[(3R)-3-hydroxyacyl]-N-acetyl-alpha-D-glucosamine + H2O = a UDP-3-O-[(3R)-3-hydroxyacyl]-alpha-D-glucosamine + acetate. It participates in glycolipid biosynthesis; lipid IV(A) biosynthesis; lipid IV(A) from (3R)-3-hydroxytetradecanoyl-[acyl-carrier-protein] and UDP-N-acetyl-alpha-D-glucosamine: step 2/6. Catalyzes the hydrolysis of UDP-3-O-myristoyl-N-acetylglucosamine to form UDP-3-O-myristoylglucosamine and acetate, the committed step in lipid A biosynthesis. The protein is UDP-3-O-acyl-N-acetylglucosamine deacetylase of Pseudomonas entomophila (strain L48).